A 1214-amino-acid chain; its full sequence is Zinc finger E-box-binding homeobox 2 (1214 aa).

A disordered region spans residues 1 to 101 (MKQPIMADGP…GVEHPWHNNE (101 aa)). Positions 12–24 (CKRRKQANPRRKN) are enriched in basic residues. Over residues 57–74 (DQETSPASVPNHESSPHV) the composition is skewed to polar residues. Residues 89 to 98 (REGGVEHPWH) show a composition bias toward basic and acidic residues. Position 142 is a phosphoserine (Ser142). 3 consecutive C2H2-type zinc fingers follow at residues 211–234 (LTCPYCDRGYKRLTSLKEHIKYRH), 241–263 (FSCPLCSYTFAYRTQLERHMVTH), and 282–304 (FKCTECGKAFKYKHHLKEHLRIH). Residues 310-334 (YECPNCKKRFSHSGSYSSHISSKKC) form a C2H2-type 4; atypical zinc finger. A phosphoserine mark is found at Ser356, Ser360, and Ser364. Lys377 is modified (N6-acetyllysine). Lys391 participates in a covalent cross-link: Glycyl lysine isopeptide (Lys-Gly) (interchain with G-Cter in SUMO); alternate. Lys391 participates in a covalent cross-link: Glycyl lysine isopeptide (Lys-Gly) (interchain with G-Cter in SUMO2); alternate. Residues 437–487 (QHLGVGMEAPLLGFPTMNSNLSEVQKVLQIVDNTVSRQKMDCKAEEISKLK) are SMAD-MH2 binding domain. Residues Lys479 and Lys555 each participate in a glycyl lysine isopeptide (Lys-Gly) (interchain with G-Cter in SUMO2) cross-link. The C2H2-type 5; atypical zinc-finger motif lies at 581-605 (FSCQFCKESFPGPIPLHQHERYLCK). Residues Lys611 and Lys632 each participate in a glycyl lysine isopeptide (Lys-Gly) (interchain with G-Cter in SUMO2) cross-link. Residues 644–703 (GMTSPINPYKDHMSVLKAYYAMNMEPNSDELLKISIAVGLPQEFVKEWFEQRKVYQYSNS) constitute a DNA-binding region (homeobox; atypical). Ser647 bears the Phosphoserine mark. Residues 702–715 (NSRSPSLERSSKPL) show a composition bias toward low complexity. Disordered stretches follow at residues 702-740 (NSRSPSLERSSKPLAPNSNPPTKDSLLPRSPVKPMDSIT), 771-810 (PVEKLDHSRSNTPSPLNLSSTSSKNSHSSSYTPNSFSSEE), and 832-857 (ATKNKTKASSISLDHNSVSSSSENSD). Lys713 is covalently cross-linked (Glycyl lysine isopeptide (Lys-Gly) (interchain with G-Cter in SUMO2)). Phosphoserine is present on residues Ser731 and Ser780. Low complexity-rich tracts occupy residues 780–808 (SNTPSPLNLSSTSSKNSHSSSYTPNSFSS) and 840–854 (SSISLDHNSVSSSSE). Thr782 bears the Phosphothreonine mark. Ser784 carries the post-translational modification Phosphoserine. Lys866 is covalently cross-linked (Glycyl lysine isopeptide (Lys-Gly) (interchain with G-Cter in SUMO); alternate). Lys866 participates in a covalent cross-link: Glycyl lysine isopeptide (Lys-Gly) (interchain with G-Cter in SUMO2); alternate. 2 C2H2-type zinc fingers span residues 999–1021 (YACDLCDKTFQKSSSLLRHKYEH) and 1027–1049 (HQCQICKKAFKHKHHLIEHSRLH). The segment at 1055-1076 (YQCDKCGKRFSHSGSYSQHMNH) adopts a C2H2-type 8; atypical zinc-finger fold. A disordered region spans residues 1117–1214 (TPQGYSDSEE…HEEDNMEDGM (98 aa)). Phosphoserine is present on residues Ser1122 and Ser1124. Positions 1127–1155 (RESMPRDGESEKEHEKEGEDGYGKLGRQD) are enriched in basic and acidic residues. The span at 1156-1167 (GDEEFEEEEEES) shows a compositional bias: acidic residues. Composition is skewed to basic and acidic residues over residues 1168–1179 (ENKSMDTDPETI) and 1186–1205 (GDHSMDDSSEDGKMETKSDH). A Phosphoserine modification is found at Ser1203.

The protein belongs to the delta-EF1/ZFH-1 C2H2-type zinc-finger family. As to quaternary structure, binds activated SMAD1, activated SMAD2 and activated SMAD3; binding with SMAD4 is not detected. Interacts with CBX4 and CTBP1. Post-translationally, sumoylation on Lys-391 and Lys-866 is promoted by the E3 SUMO-protein ligase CBX4, and impairs interaction with CTBP1 and transcription repression activity.

It localises to the nucleus. Its subcellular location is the chromosome. Its function is as follows. Transcriptional inhibitor that binds to DNA sequence 5'-CACCT-3' in different promoters. Represses transcription of E-cadherin. Represses expression of MEOX2. The polypeptide is Zinc finger E-box-binding homeobox 2 (Homo sapiens (Human)).